The chain runs to 144 residues: Putative sugar phosphate isomerase RBE_0278 (144 aa).

Substrate is bound at residue His-12. Residue His-101 is the Proton donor of the active site. A substrate-binding site is contributed by Arg-135.

This sequence belongs to the LacAB/RpiB family.

The polypeptide is Putative sugar phosphate isomerase RBE_0278 (Rickettsia bellii (strain RML369-C)).